Reading from the N-terminus, the 283-residue chain is uncharacterized protein (283 aa).

The next 4 helical transmembrane spans lie at 11–31 (LFAYFSGLIAALSLFIYYVSA), 35–55 (EGALILCITFGVIAAGIWFGP), 56–76 (IYALAVTLIVLFVLGTLMMFF), and 93–113 (LVVWGIALLLFSFISGRIHDI). In terms of domain architecture, GGDEF spans 162–283 (NSFVFLLLHM…LENEMMMNEL (122 aa)).

The protein localises to the cell membrane. This is an uncharacterized protein from Bacillus subtilis (strain 168).